The following is a 910-amino-acid chain: DNA mismatch repair protein MutS (910 aa).

An ATP-binding site is contributed by Gly-658 to Ser-665.

It belongs to the DNA mismatch repair MutS family.

This protein is involved in the repair of mismatches in DNA. It is possible that it carries out the mismatch recognition step. This protein has a weak ATPase activity. This chain is DNA mismatch repair protein MutS, found in Brucella anthropi (strain ATCC 49188 / DSM 6882 / CCUG 24695 / JCM 21032 / LMG 3331 / NBRC 15819 / NCTC 12168 / Alc 37) (Ochrobactrum anthropi).